A 1087-amino-acid polypeptide reads, in one-letter code: A-kinase anchor protein 9 (1087 aa).

Residues 5 to 461 adopt a coiled-coil conformation; that stretch reads EVQCQAEKVR…REREKMERIQ (457 aa). Residues 559 to 572 are PKA-RII subunit binding domain; it reads SLQKVLEEKVAAAL. Residues 614 to 773 adopt a coiled-coil conformation; the sequence is MESDVSALTW…SEKEDKTEVQ (160 aa). The segment covering 667-685 has biased composition (basic and acidic residues); it reads VQDSETKQRERERQSRLHG. The tract at residues 667 to 691 is disordered; sequence VQDSETKQRERERQSRLHGDLGVLE.

As to quaternary structure, interacts with the regulatory region of protein kinase N (PKN), protein phosphatase 2A (PP2A), protein phosphatase 1 (PP1) and the immature non-phosphorylated form of PKC epsilon. Interacts with CIP4 and FNBP1. Interacts with chloride intracellular channel proteins CLIC1, CLIC4 and CLIC5. CSNK1D binding promotes its centrosomal subcellular location. Interacts with GM130/GOLGA2; leading to recruitment to the Golgi apparatus. Interacts with KCNQ1; targets protein kinase A (PKA) catalytic and regulatory subunits and protein phosphatase 1 (PP1), to the heterodimer KCNQ1-KCNE1. Interacts with PDE4DIP; this interaction stabilizes both proteins. In complex with PDE4DIP, recruits CAMSAP2 to the Golgi apparatus. Forms a pericentrosomal complex with CDK5RAP2, EB1/MAPRE1 and PDE4DIP; within this complex, MAPRE1 binding to CDK5RAP2 may be mediated by PDE4DIP. The interaction with PDE4DIP is isoform-specific. Interacts with MAPRE1 and MAPRE3. Interacts (via C-terminus) with CAMSAP2; this interaction is much stronger in the presence of PDE4DIP. Interacts with CAMSAP3. Interacts (via C-terminus) with the gamma-tubulin ring complex (gamma-TuRC), composed of gamma-tubulin, TUBGCP2, TUBGCP3, TUBGCP4, TUBGCP5 and TUBGCP6. As to expression, highly expressed in gastric parietal cells.

It localises to the golgi apparatus. The protein resides in the cytoplasm. The protein localises to the cytoskeleton. It is found in the microtubule organizing center. Its subcellular location is the centrosome. Functionally, scaffolding protein that assembles several protein kinases and phosphatases on the centrosome and Golgi apparatus. Required to maintain the integrity of the Golgi apparatus. Required for microtubule nucleation at the cis-side of the Golgi apparatus. Required for association of the centrosomes with the poles of the bipolar mitotic spindle during metaphase. In complex with PDE4DIP, recruits CAMSAP2 to the Golgi apparatus and tethers non-centrosomal minus-end microtubules to the Golgi, an important step for polarized cell movement. In complex with PDE4DIP, EB1/MAPRE1 and CDK5RAP2, contributes to microtubules nucleation and extension also from the centrosome to the cell periphery. The interaction with PDE4DIP is isoform-specific. This Oryctolagus cuniculus (Rabbit) protein is A-kinase anchor protein 9 (AKAP9).